The primary structure comprises 89 residues: Small ribosomal subunit protein uS15 (89 aa).

Residues M1–D21 are compositionally biased toward basic and acidic residues. The disordered stretch occupies residues M1–S24.

Belongs to the universal ribosomal protein uS15 family. In terms of assembly, part of the 30S ribosomal subunit. Forms a bridge to the 50S subunit in the 70S ribosome, contacting the 23S rRNA.

One of the primary rRNA binding proteins, it binds directly to 16S rRNA where it helps nucleate assembly of the platform of the 30S subunit by binding and bridging several RNA helices of the 16S rRNA. In terms of biological role, forms an intersubunit bridge (bridge B4) with the 23S rRNA of the 50S subunit in the ribosome. The protein is Small ribosomal subunit protein uS15 of Rhodopseudomonas palustris (strain BisA53).